Consider the following 237-residue polypeptide: Leucyl/phenylalanyl-tRNA--protein transferase (237 aa).

The protein belongs to the L/F-transferase family.

The protein localises to the cytoplasm. It catalyses the reaction N-terminal L-lysyl-[protein] + L-leucyl-tRNA(Leu) = N-terminal L-leucyl-L-lysyl-[protein] + tRNA(Leu) + H(+). The enzyme catalyses N-terminal L-arginyl-[protein] + L-leucyl-tRNA(Leu) = N-terminal L-leucyl-L-arginyl-[protein] + tRNA(Leu) + H(+). The catalysed reaction is L-phenylalanyl-tRNA(Phe) + an N-terminal L-alpha-aminoacyl-[protein] = an N-terminal L-phenylalanyl-L-alpha-aminoacyl-[protein] + tRNA(Phe). Functions in the N-end rule pathway of protein degradation where it conjugates Leu, Phe and, less efficiently, Met from aminoacyl-tRNAs to the N-termini of proteins containing an N-terminal arginine or lysine. The sequence is that of Leucyl/phenylalanyl-tRNA--protein transferase (aat) from Vibrio vulnificus (strain CMCP6).